The following is a 287-amino-acid chain: Bifunctional protein FolD (287 aa).

Residues 160–162 (GRS), Ser-189, and Thr-230 each bind NADP(+).

Belongs to the tetrahydrofolate dehydrogenase/cyclohydrolase family. As to quaternary structure, homodimer.

It carries out the reaction (6R)-5,10-methylene-5,6,7,8-tetrahydrofolate + NADP(+) = (6R)-5,10-methenyltetrahydrofolate + NADPH. The catalysed reaction is (6R)-5,10-methenyltetrahydrofolate + H2O = (6R)-10-formyltetrahydrofolate + H(+). It functions in the pathway one-carbon metabolism; tetrahydrofolate interconversion. Functionally, catalyzes the oxidation of 5,10-methylenetetrahydrofolate to 5,10-methenyltetrahydrofolate and then the hydrolysis of 5,10-methenyltetrahydrofolate to 10-formyltetrahydrofolate. This chain is Bifunctional protein FolD, found in Chlamydia muridarum (strain MoPn / Nigg).